Consider the following 113-residue polypeptide: uncharacterized protein (113 aa).

The protein resides in the cytoplasm. It localises to the nucleus. This is an uncharacterized protein from Saccharomyces cerevisiae (strain ATCC 204508 / S288c) (Baker's yeast).